The sequence spans 225 residues: Histone H1 (225 aa).

The tract at residues 1–20 (MGPKATSGTRGRGKKVGTKT) is disordered. One can recognise an H15 domain in the interval 23-94 (PLPKYKDLIV…GPAGSIKLLK (72 aa)). The interval 95–147 (KAAQPKPEEAKRAAKPAKRVVKAAKPAKAKPAKAAKAAKPAKPVKAAKAASAV) is disordered. The segment covering 107-127 (AAKPAKRVVKAAKPAKAKPAK) has biased composition (basic residues). Residues 128–147 (AAKAAKPAKPVKAAKAASAV) are compositionally biased toward low complexity.

It belongs to the histone H1/H5 family.

Its subcellular location is the nucleus. It is found in the chromosome. Functionally, could act as an H1-type linker histone. The polypeptide is Histone H1 (HHOA) (Eremothecium gossypii (strain ATCC 10895 / CBS 109.51 / FGSC 9923 / NRRL Y-1056) (Yeast)).